The chain runs to 2575 residues: Non-reducing polyketide synthase pks11 (2575 aa).

Residues 89–228 (LANIILSPLV…ASKTVSTLQG (140 aa)) enclose the Starter acyltransferase (SAT) domain. Catalysis depends on cysteine 129, which acts as the Nucleophile; for transacylase activity. The Proton donor/acceptor; for transacylase activity role is filled by histidine 247. A Ketosynthase family 3 (KS3) domain is found at 373-790 (EDDIAVVGMS…GSNASAVVTE (418 aa)). Catalysis depends on for beta-ketoacyl synthase activity residues cysteine 538, histidine 673, and histidine 713. Positions 901–1192 (FGGQISTYVG…TNMASRALGS (292 aa)) constitute a Malonyl-CoA:ACP transacylase (MAT) domain. Residues 1276–1409 (PKGLWSFIDY…GQIIFVSTDN (134 aa)) are N-terminal hotdog fold. In terms of domain architecture, PKS/mFAS DH spans 1276-1586 (PKGLWSFIDY…YHKVAKATMS (311 aa)). A product template (PT) domain region spans residues 1307 to 1584 (LVSGHIIAQT…VNYHKVAKAT (278 aa)). Histidine 1311 acts as the Proton acceptor; for dehydratase activity in catalysis. The C-terminal hotdog fold stretch occupies residues 1437-1586 (ADDIIQGRNI…YHKVAKATMS (150 aa)). The active-site Proton donor; for dehydratase activity is the aspartate 1493. Residues 1597–1606 (TTSTSTNVKS) are compositionally biased toward polar residues. A disordered region spans residues 1597-1636 (TTSTSTNVKSSPAAAEGSSPVENGASGSGSKAKKTKSGAG). The region spanning 1637-1711 (QDVVNKTKGL…GLVQIIKSTL (75 aa)) is the Carrier domain. Serine 1671 carries the O-(pantetheine 4'-phosphoryl)serine modification. Positions 1713–1762 (VSDDEEGSDQEGSEASSSESSTTFTPSTTATTVSDVEDNGNEKSIGKEKS) are disordered. Residues 1714 to 1724 (SDDEEGSDQEG) are compositionally biased toward acidic residues. A compositionally biased stretch (low complexity) spans 1725 to 1746 (SEASSSESSTTFTPSTTATTVS). Positions 1752 to 1762 (GNEKSIGKEKS) are enriched in basic and acidic residues. The segment at 1835–2130 (LTRIPHDPQH…HIDWTDGNSP (296 aa)) is methyltransferase domain. The 245-residue stretch at 2204-2448 (ITGATGSLGS…LCWTPVDDVA (245 aa)) folds into the Thioester reductase (TE) domain.

Pantetheine 4'-phosphate is required as a cofactor.

It functions in the pathway secondary metabolite biosynthesis. Its function is as follows. Non-reducing polyketide synthase; part of the gene cluster that mediates the biosynthesis of mitorubrinol and mitorubrinic acid, two virulence factors that improve T.marneffei intracellular survival in macrophages. The two polyketide synthases pks12 and pks11 are probably responsible for sequential use in the biosynthesis of mitorubrinol and mitorubrinic acid. The first part of the biosynthesis is probably catalyzed by pks12, which synthesized orsellinic acid. This tetraketide is then used as a starter unit for pks11, which possesses a SAT domain, in the second part of the biosynthesis. Pks11, contains a methyltransferase domain, also served that methylates the products, using a methyl group from S-adenosylmethionine. The sequence is that of Non-reducing polyketide synthase pks11 from Talaromyces marneffei (Penicillium marneffei).